A 329-amino-acid chain; its full sequence is Transcription factor MYB2 (329 aa).

HTH myb-type domains lie at 17-69 (GGDL…LNYL) and 70-124 (RPDL…QKHA). DNA-binding regions (H-T-H motif) lie at residues 45-69 (WNSLARSAGLKRTGKSCRLRWLNYL) and 97-120 (WSKIAQHLPGRTDNEIKNYWRTRV). Composition is skewed to low complexity over residues 155–166 (AAAGQQQQQEGG) and 217–235 (LSSTTAGSSSLSTDSGAGA). Disordered stretches follow at residues 155-189 (AAAGQQQQQEGGTDTPPLSWQHGGSDGLYESPELP) and 206-242 (GAQSGGTPAPELSSTTAGSSSLSTDSGAGAQPSWPTQ).

In terms of tissue distribution, highly expressed in leaves. Expressed in roots and shoots. Expressed at low levels in flowers.

It is found in the nucleus. Its function is as follows. Transcription factor involved in abiotic stress responses. Plays a regulatory role in tolerance to salt, cold, and drought stresses. Positively regulates the expression of genes involved in proline synthesis and transport, and genes involved in reactive oxygen species (ROS) scavenging such as peroxidase, superoxide dismutase and catalase during salt stress. Transactivates stress-related genes, including LEA3, RAB16A and DREB2A during salt stress. The polypeptide is Transcription factor MYB2 (Oryza sativa subsp. japonica (Rice)).